Reading from the N-terminus, the 259-residue chain is 2-oxoglutaramate amidase (259 aa).

In terms of domain architecture, CN hydrolase spans 3 to 238 (WTISCLQFDI…EGIVRAEIDL (236 aa)). Catalysis depends on glutamate 42, which acts as the Proton acceptor. Catalysis depends on lysine 111, which acts as the Proton donor. Cysteine 145 serves as the catalytic Nucleophile.

It belongs to the carbon-nitrogen hydrolase superfamily. NIT1/NIT2 family.

It catalyses the reaction 2-oxoglutaramate + H2O = 2-oxoglutarate + NH4(+). Involved in the methylthioribose (MTR) recycling pathway. Probably catalyzes the conversion of 2-oxoglutaramate to 2-oxoglutarate. The sequence is that of 2-oxoglutaramate amidase from Bacillus subtilis (strain 168).